Here is a 590-residue protein sequence, read N- to C-terminus: Putative ABC transporter ATP-binding protein MM_3016 (590 aa).

ABC transporter domains are found at residues 11 to 251 (VRFE…KLGI) and 317 to 550 (VRIE…AGLI). ATP is bound by residues 45-52 (GPSGCGKS) and 350-357 (GHNGAGKT).

It belongs to the ABC transporter superfamily.

The protein localises to the cell membrane. In terms of biological role, probably part of an ABC transporter complex. Responsible for energy coupling to the transport system. The chain is Putative ABC transporter ATP-binding protein MM_3016 from Methanosarcina mazei (strain ATCC BAA-159 / DSM 3647 / Goe1 / Go1 / JCM 11833 / OCM 88) (Methanosarcina frisia).